The sequence spans 246 residues: Putative L,D-transpeptidase YafK (246 aa).

The N-terminal stretch at 1–19 (MRKIALILAMLLIPCVSFA) is a signal peptide. A L,D-TPase catalytic domain is found at 44 to 174 (VYIQIFKEER…GQPSVQVSIY (131 aa)). Catalysis depends on His-135, which acts as the Proton donor/acceptor. Cys-143 functions as the Nucleophile in the catalytic mechanism.

Belongs to the YkuD family.

It participates in cell wall biogenesis; peptidoglycan biosynthesis. The polypeptide is Putative L,D-transpeptidase YafK (yafK) (Escherichia coli O157:H7).